We begin with the raw amino-acid sequence, 1392 residues long: Ankyrin repeat domain-containing protein 30B (1392 aa).

Positions 1-21 are disordered; that stretch reads MKRLLAAAGKGVRGPEPPNPF. ANK repeat units follow at residues 72 to 101, 105 to 134, 138 to 167, 171 to 200, and 204 to 233; these read KKRT…QLNV, EGRT…DLNY, YGNT…VIEV, ASLT…NANA, and SKCT…DVFA. Disordered stretches follow at residues 265–292, 558–587, 636–656, 671–690, 830–877, and 904–926; these read PKNP…ERTP, AQMF…VSQK, DRET…PTCG, RETL…PTCG, KEGA…SDSE, and GKIE…QNSV. Polar residues-rich tracts occupy residues 267–280 and 576–586; these read NPQN…STGT and DSESPCETVSQ. Basic and acidic residues predominate over residues 636–650; that stretch reads DRETFKAESPDKDGL. The span at 830-840 shows a compositional bias: polar residues; it reads KEGATKTVTGQ. Composition is skewed to basic and acidic residues over residues 864-874 and 904-915; these read LGRKEDTKSTS and GKIEESPEKPSH. Coiled coils occupy residues 960–1168 and 1270–1318; these read RELK…KQDK and ETQC…QQLV.

Expressed in brain, breast and testis.

The protein is Ankyrin repeat domain-containing protein 30B (ANKRD30B) of Homo sapiens (Human).